We begin with the raw amino-acid sequence, 650 residues long: Acetyl-coenzyme A synthetase (650 aa).

CoA-binding positions include arginine 191–arginine 194, threonine 311, and asparagine 335. Residues glycine 387–proline 389, aspartate 411–threonine 416, aspartate 500, and arginine 515 each bind ATP. Serine 523 contacts CoA. Residue arginine 526 participates in ATP binding. Mg(2+) is bound by residues valine 537, histidine 539, and valine 542. Residue arginine 584 coordinates CoA. N6-acetyllysine is present on lysine 609.

It belongs to the ATP-dependent AMP-binding enzyme family. Mg(2+) serves as cofactor. Acetylated. Deacetylation by the SIR2-homolog deacetylase activates the enzyme.

The enzyme catalyses acetate + ATP + CoA = acetyl-CoA + AMP + diphosphate. Its function is as follows. Catalyzes the conversion of acetate into acetyl-CoA (AcCoA), an essential intermediate at the junction of anabolic and catabolic pathways. AcsA undergoes a two-step reaction. In the first half reaction, AcsA combines acetate with ATP to form acetyl-adenylate (AcAMP) intermediate. In the second half reaction, it can then transfer the acetyl group from AcAMP to the sulfhydryl group of CoA, forming the product AcCoA. The sequence is that of Acetyl-coenzyme A synthetase from Shewanella baltica (strain OS155 / ATCC BAA-1091).